A 179-amino-acid polypeptide reads, in one-letter code: Translation initiation factor IF-3 (179 aa).

The protein belongs to the IF-3 family. As to quaternary structure, monomer.

The protein localises to the cytoplasm. IF-3 binds to the 30S ribosomal subunit and shifts the equilibrium between 70S ribosomes and their 50S and 30S subunits in favor of the free subunits, thus enhancing the availability of 30S subunits on which protein synthesis initiation begins. This is Translation initiation factor IF-3 from Buchnera aphidicola subsp. Acyrthosiphon pisum (strain 5A).